We begin with the raw amino-acid sequence, 398 residues long: MAKKKFNREKIHLNVGTIGHVDHGKTTLTAALTKVSSDLYGSECRPFDSIDNAPEERERGITISTSHVEYESETKHYAHVDCPGHADYIKNMITGAAQMDGAILVCSAVDGPMPQTREHILLARQVGVPTIIVYLNKADCVKDKELLELVEMEIRELLTEYDFDGNNTKIIIGSALLALENKDDNQLGTSSIIKLLEILDKNIPVPNRIIDKPFLMPIEDVFSISGRGTVVTGKIERGIIKTGEEIEIVGFKETIKTIVIGIEMFKKTLDEGFAGENVGILLRSIKREEVERGQVLIKSGTIKPHTNFICEVYILSKEEGGRHTPFFKGYKPQFYFRTTDITGICDLPKNIEMVMPGDNVKLIVKLLSSIAIEKGLRFAIREGGKTVGAGIITEVLND.

The 198-residue stretch at 10 to 207 (KIHLNVGTIG…ILDKNIPVPN (198 aa)) folds into the tr-type G domain. Positions 19-26 (GHVDHGKT) are G1. 19 to 26 (GHVDHGKT) lines the GTP pocket. Residue Thr26 participates in Mg(2+) binding. The segment at 60 to 64 (GITIS) is G2. Positions 81 to 84 (DCPG) are G3. GTP contacts are provided by residues 81 to 85 (DCPGH) and 136 to 139 (NKAD). A G4 region spans residues 136–139 (NKAD). Residues 174–176 (SAL) form a G5 region.

The protein belongs to the TRAFAC class translation factor GTPase superfamily. Classic translation factor GTPase family. EF-Tu/EF-1A subfamily. As to quaternary structure, monomer.

The protein localises to the cytoplasm. The catalysed reaction is GTP + H2O = GDP + phosphate + H(+). In terms of biological role, GTP hydrolase that promotes the GTP-dependent binding of aminoacyl-tRNA to the A-site of ribosomes during protein biosynthesis. The sequence is that of Elongation factor Tu from Carsonella ruddii (strain PV).